The sequence spans 231 residues: Large ribosomal subunit protein uL1 (231 aa).

Belongs to the universal ribosomal protein uL1 family. In terms of assembly, part of the 50S ribosomal subunit.

Its function is as follows. Binds directly to 23S rRNA. The L1 stalk is quite mobile in the ribosome, and is involved in E site tRNA release. Protein L1 is also a translational repressor protein, it controls the translation of the L11 operon by binding to its mRNA. This Janthinobacterium sp. (strain Marseille) (Minibacterium massiliensis) protein is Large ribosomal subunit protein uL1.